The sequence spans 101 residues: Fructose-bisphosphate aldolase (101 aa).

The active-site Schiff-base intermediate with dihydroxyacetone-P is Lys-11.

It belongs to the class I fructose-bisphosphate aldolase family.

The enzyme catalyses beta-D-fructose 1,6-bisphosphate = D-glyceraldehyde 3-phosphate + dihydroxyacetone phosphate. It participates in carbohydrate degradation; glycolysis; D-glyceraldehyde 3-phosphate and glycerone phosphate from D-glucose: step 4/4. In Lymnaea stagnalis (Great pond snail), this protein is Fructose-bisphosphate aldolase.